A 204-amino-acid polypeptide reads, in one-letter code: Imidazoleglycerol-phosphate dehydratase (204 aa).

A disordered region spans residues 183–204 (DPRMDGITPSTKGTLSESGDSQ). Over residues 190–204 (TPSTKGTLSESGDSQ) the composition is skewed to polar residues.

The protein belongs to the imidazoleglycerol-phosphate dehydratase family.

It is found in the cytoplasm. The catalysed reaction is D-erythro-1-(imidazol-4-yl)glycerol 3-phosphate = 3-(imidazol-4-yl)-2-oxopropyl phosphate + H2O. It participates in amino-acid biosynthesis; L-histidine biosynthesis; L-histidine from 5-phospho-alpha-D-ribose 1-diphosphate: step 6/9. This is Imidazoleglycerol-phosphate dehydratase from Alcanivorax borkumensis (strain ATCC 700651 / DSM 11573 / NCIMB 13689 / SK2).